A 195-amino-acid chain; its full sequence is Probable WRKY transcription factor 56 (195 aa).

Residues 1 to 10 (MEGVDNTNPM) show a composition bias toward polar residues. 2 disordered regions span residues 1–20 (MEGV…ENNN) and 70–93 (EMGG…KGKG). The WRKY DNA-binding region spans 108-173 (SDDDVLDDGY…YEGVHNHPCE (66 aa)).

The protein belongs to the WRKY group II-c family.

Its subcellular location is the nucleus. Functionally, transcription factor. Interacts specifically with the W box (5'-(T)TGAC[CT]-3'), a frequently occurring elicitor-responsive cis-acting element. The chain is Probable WRKY transcription factor 56 (WRKY56) from Arabidopsis thaliana (Mouse-ear cress).